The chain runs to 284 residues: Shikimate dehydrogenase (NADP(+)) (284 aa).

Shikimate contacts are provided by residues 20–22 (SIS) and Ser67. Residue Lys71 is the Proton acceptor of the active site. Residue Asp83 participates in NADP(+) binding. Shikimate contacts are provided by Asn92 and Asp107. Residues 129–133 (GAGGA) and Ile227 contribute to the NADP(+) site. Residue Tyr229 participates in shikimate binding. Gly250 provides a ligand contact to NADP(+).

The protein belongs to the shikimate dehydrogenase family. In terms of assembly, homodimer.

It carries out the reaction shikimate + NADP(+) = 3-dehydroshikimate + NADPH + H(+). The protein operates within metabolic intermediate biosynthesis; chorismate biosynthesis; chorismate from D-erythrose 4-phosphate and phosphoenolpyruvate: step 4/7. In terms of biological role, involved in the biosynthesis of the chorismate, which leads to the biosynthesis of aromatic amino acids. Catalyzes the reversible NADPH linked reduction of 3-dehydroshikimate (DHSA) to yield shikimate (SA). This chain is Shikimate dehydrogenase (NADP(+)), found in Streptococcus pneumoniae (strain JJA).